Here is a 369-residue protein sequence, read N- to C-terminus: Methionine import ATP-binding protein MetN 2 (369 aa).

The 238-residue stretch at Val33–Leu270 folds into the ABC transporter domain. An ATP-binding site is contributed by Gly67–Ser74.

Belongs to the ABC transporter superfamily. Methionine importer (TC 3.A.1.24) family. As to quaternary structure, the complex is composed of two ATP-binding proteins (MetN), two transmembrane proteins (MetI) and a solute-binding protein (MetQ).

The protein resides in the cell inner membrane. It carries out the reaction L-methionine(out) + ATP + H2O = L-methionine(in) + ADP + phosphate + H(+). The enzyme catalyses D-methionine(out) + ATP + H2O = D-methionine(in) + ADP + phosphate + H(+). Functionally, part of the ABC transporter complex MetNIQ involved in methionine import. Responsible for energy coupling to the transport system. The chain is Methionine import ATP-binding protein MetN 2 from Pseudomonas putida (strain ATCC 47054 / DSM 6125 / CFBP 8728 / NCIMB 11950 / KT2440).